Here is a 566-residue protein sequence, read N- to C-terminus: MTKFVFVTGGVVSSLGKGIASGALAAILESRGLKVTLIKLDPYINVDPGTMSPLQHGEVFVTDDGAETDLDLGHYERFIETRMRKANNFTTGQIYQSVLDKERRGDYLGKTVQVIPHITNEIQDFIKRGARYDTPDAVDVAIVEIGGTVGDIESLPFLEAVRQMSLRMGPNNSAFVHLSYVPWIAAAGELKTKPTQHTAKQLREIGIQADVLLCRADRPIPTEERDKISLFSNVPAWGVISMWDVDTIYKVPRMLHEQGLDGLICDKLRLHTPPANLKRWDDLVYATEHPQTEVSIAMVGKYVDLSDSYKSLNEALRHAGMKNHAKVVITYVDSETLTPDTVSSLAQFDGILVPGGFGVRGVEGKICAARFARENKIPYLGICLGMQVATIEFARHVAGLKDANSTEFDPLTPHPVIALITEWKDADGTIKTRHAKSDLGGTMRLGAQSSDVSPNSLAHSIYGDVVTERHRHRYEANVNYLDTLRKSGLVISALTQREHLTEIVELPQDVHPWFVGVQFHPEFKSTPWDGHPLFNAYIAATLEQRSALSQAKKAETAKPLKVVAST.

Residues 1–270 (MTKFVFVTGG…DGLICDKLRL (270 aa)) are amidoligase domain. Serine 13 is a CTP binding site. Serine 13 provides a ligand contact to UTP. Residues 14-19 (SLGKGI) and aspartate 71 contribute to the ATP site. Mg(2+)-binding residues include aspartate 71 and glutamate 144. CTP is bound by residues 151-153 (DIE), 191-196 (KTKPTQ), and lysine 227. Residues 191 to 196 (KTKPTQ) and lysine 227 contribute to the UTP site. One can recognise a Glutamine amidotransferase type-1 domain in the interval 295 to 547 (SIAMVGKYVD…IAATLEQRSA (253 aa)). Residue glycine 356 participates in L-glutamine binding. The active-site Nucleophile; for glutamine hydrolysis is the cysteine 383. L-glutamine is bound by residues 384–387 (LGMQ), glutamate 407, and arginine 473. Catalysis depends on residues histidine 520 and glutamate 522.

This sequence belongs to the CTP synthase family. As to quaternary structure, homotetramer.

The catalysed reaction is UTP + L-glutamine + ATP + H2O = CTP + L-glutamate + ADP + phosphate + 2 H(+). It carries out the reaction L-glutamine + H2O = L-glutamate + NH4(+). The enzyme catalyses UTP + NH4(+) + ATP = CTP + ADP + phosphate + 2 H(+). The protein operates within pyrimidine metabolism; CTP biosynthesis via de novo pathway; CTP from UDP: step 2/2. With respect to regulation, allosterically activated by GTP, when glutamine is the substrate; GTP has no effect on the reaction when ammonia is the substrate. The allosteric effector GTP functions by stabilizing the protein conformation that binds the tetrahedral intermediate(s) formed during glutamine hydrolysis. Inhibited by the product CTP, via allosteric rather than competitive inhibition. Functionally, catalyzes the ATP-dependent amination of UTP to CTP with either L-glutamine or ammonia as the source of nitrogen. Regulates intracellular CTP levels through interactions with the four ribonucleotide triphosphates. The polypeptide is CTP synthase (Polaromonas naphthalenivorans (strain CJ2)).